A 398-amino-acid polypeptide reads, in one-letter code: Phosphoglycerate kinase (398 aa).

Residues 20-22 (DLN), R35, 58-61 (HLGR), R118, and R155 each bind substrate. Residues K206, G295, E326, and 354–357 (GGDS) contribute to the ATP site.

The protein belongs to the phosphoglycerate kinase family. Monomer.

It localises to the cytoplasm. The enzyme catalyses (2R)-3-phosphoglycerate + ATP = (2R)-3-phospho-glyceroyl phosphate + ADP. The protein operates within carbohydrate degradation; glycolysis; pyruvate from D-glyceraldehyde 3-phosphate: step 2/5. This Onion yellows phytoplasma (strain OY-M) protein is Phosphoglycerate kinase.